Consider the following 426-residue polypeptide: Enolase (426 aa).

Gln165 is a binding site for (2R)-2-phosphoglycerate. Catalysis depends on Glu207, which acts as the Proton donor. Residues Asp244, Glu285, and Asp312 each coordinate Mg(2+). 4 residues coordinate (2R)-2-phosphoglycerate: Lys337, Arg366, Ser367, and Lys388. The active-site Proton acceptor is the Lys337.

It belongs to the enolase family. It depends on Mg(2+) as a cofactor.

The protein resides in the cytoplasm. It is found in the secreted. The protein localises to the cell surface. It carries out the reaction (2R)-2-phosphoglycerate = phosphoenolpyruvate + H2O. It functions in the pathway carbohydrate degradation; glycolysis; pyruvate from D-glyceraldehyde 3-phosphate: step 4/5. In terms of biological role, catalyzes the reversible conversion of 2-phosphoglycerate (2-PG) into phosphoenolpyruvate (PEP). It is essential for the degradation of carbohydrates via glycolysis. The protein is Enolase of Cyanothece sp. (strain PCC 7425 / ATCC 29141).